The following is a 211-amino-acid chain: Thiamine-phosphate synthase (211 aa).

4-amino-2-methyl-5-(diphosphooxymethyl)pyrimidine is bound by residues 43–47 and asparagine 75; that span reads QLRDK. Residues aspartate 76 and aspartate 95 each coordinate Mg(2+). Position 114 (serine 114) interacts with 4-amino-2-methyl-5-(diphosphooxymethyl)pyrimidine. 140–142 contacts 2-[(2R,5Z)-2-carboxy-4-methylthiazol-5(2H)-ylidene]ethyl phosphate; sequence TAS. Lysine 143 is a binding site for 4-amino-2-methyl-5-(diphosphooxymethyl)pyrimidine. 2-[(2R,5Z)-2-carboxy-4-methylthiazol-5(2H)-ylidene]ethyl phosphate is bound by residues glycine 170 and 190-191; that span reads IS.

Belongs to the thiamine-phosphate synthase family. The cofactor is Mg(2+).

The catalysed reaction is 2-[(2R,5Z)-2-carboxy-4-methylthiazol-5(2H)-ylidene]ethyl phosphate + 4-amino-2-methyl-5-(diphosphooxymethyl)pyrimidine + 2 H(+) = thiamine phosphate + CO2 + diphosphate. It catalyses the reaction 2-(2-carboxy-4-methylthiazol-5-yl)ethyl phosphate + 4-amino-2-methyl-5-(diphosphooxymethyl)pyrimidine + 2 H(+) = thiamine phosphate + CO2 + diphosphate. The enzyme catalyses 4-methyl-5-(2-phosphooxyethyl)-thiazole + 4-amino-2-methyl-5-(diphosphooxymethyl)pyrimidine + H(+) = thiamine phosphate + diphosphate. It participates in cofactor biosynthesis; thiamine diphosphate biosynthesis; thiamine phosphate from 4-amino-2-methyl-5-diphosphomethylpyrimidine and 4-methyl-5-(2-phosphoethyl)-thiazole: step 1/1. Functionally, condenses 4-methyl-5-(beta-hydroxyethyl)thiazole monophosphate (THZ-P) and 2-methyl-4-amino-5-hydroxymethyl pyrimidine pyrophosphate (HMP-PP) to form thiamine monophosphate (TMP). The chain is Thiamine-phosphate synthase from Coprothermobacter proteolyticus (strain ATCC 35245 / DSM 5265 / OCM 4 / BT).